Here is a 755-residue protein sequence, read N- to C-terminus: Cartilage oligomeric matrix protein (755 aa).

The signal sequence occupies residues 1–19; that stretch reads MSPTACVLVLALAALRATG. A COMP N-terminal region spans residues 21–84; it reads GQIPLGGDLA…PARTPGLSVR (64 aa). One can recognise an EGF-like 1 domain in the interval 85-124; the sequence is PVALCAPGSCFPGVVCTETATGARCGPCPPGYTGNGSHCT. Disulfide bonds link cysteine 89–cysteine 100, cysteine 94–cysteine 109, cysteine 112–cysteine 123, cysteine 129–cysteine 140, cysteine 134–cysteine 149, cysteine 152–cysteine 176, cysteine 182–cysteine 195, cysteine 189–cysteine 204, cysteine 207–cysteine 219, cysteine 227–cysteine 241, cysteine 235–cysteine 251, cysteine 253–cysteine 264, cysteine 280–cysteine 285, cysteine 290–cysteine 310, cysteine 326–cysteine 346, cysteine 349–cysteine 369, cysteine 385–cysteine 405, cysteine 408–cysteine 428, cysteine 446–cysteine 466, cysteine 482–cysteine 502, and cysteine 518–cysteine 739. A glycan (N-linked (GlcNAc...) asparagine) is linked at asparagine 119. The EGF-like 2; calcium-binding domain maps to 125 to 177; sequence DVNECNAHPCFPRVRCINTSPGFHCEACPPGFSGPTHEGVGLTFAKTNKQVCT. An EGF-like 3; calcium-binding domain is found at 178–220; the sequence is DINECETGQHNCVPNSVCVNTRGSFQCGPCQPGFVGDQRSGCQ. The EGF-like 4 domain occupies 223 to 265; it reads GQHFCPDGSPSPCHEKADCILERDGSRSCVCAVGWAGNGLLCG. TSP type-3 repeat units lie at residues 266–298, 299–334, 335–357, 358–393, 394–416, 417–454, 455–490, and 491–526; these read RDTDLDGFPDEKLRCSERQCRKDNCVTVPNSGQ, EDVDRDRIGDACDPDADGDGVPNEQDNCPLVRNPDQ, RNSDKDKWGDACDNCRSQKNDDQ, KDTDRDGQGDACDDDIDGDRIRNVADNCPRVPNFDQ, SDSDGDGVGDACDNCPQKDNPDQ, RDVDHDFVGDACDSDQDQDGDGHQDSRDNCPTVPNSAQ, QDSDHDGKGDACDDDDDNDGVPDSRDNCRLVPNPGQ, and EDNDRDGVGDACQGDFDADKVIDKIDVCPENAEVTL. The disordered stretch occupies residues 295–501; sequence NSGQEDVDRD…DNDRDGVGDA (207 aa). 2 stretches are compositionally biased toward basic and acidic residues: residues 332-344 and 350-365; these read PDQRNSDKDKWGD and RSQKNDDQKDTDRDGQ. Residue serine 394 is modified to Phosphoserine. Composition is skewed to basic and acidic residues over residues 412–424 and 456–465; these read DNPDQRDVDHDFV and DSDHDGKGDA. The tract at residues 525–755 is mediates cell survival and induction of the IAP family of survival proteins; sequence TLTDFRAFQT…DYERHRLRRA (231 aa). Residues 530–744 form the TSP C-terminal domain; sequence RAFQTVVLDP…LRYRCNDTIP (215 aa). Asparagine 740 carries an N-linked (GlcNAc...) asparagine glycan.

Belongs to the thrombospondin family. As to quaternary structure, pentamer; disulfide-linked. Exists in a more compact conformation in the presence of calcium and shows a more extended conformation in the absence of calcium. Interacts with ITGB3, ITGA5 and FN1. Binding to FN1 requires the presence of divalent cations (Ca(2+), Mg(2+) or Mn(2+)). The greatest amount of binding is seen in the presence of Mn(2+). Interacts with MATN1, MATN3, MATN4 and ACAN. Binds heparin, heparan sulfate and chondroitin sulfate. EDTA dimishes significantly its binding to ACAN and abolishes its binding to MATN3, MATN4 and chondroitin sulfate. Interacts with collagen I, II and IX, and interaction with these collagens is dependent on the presence of zinc ions. Interacts with ADAMTS12. Interacts with ITGA7. Requires Ca(2+) as cofactor. Post-translationally, proteolytically cleaved by metalloproteases ADAMTS4 and ADAMTS1 with ADAMTS4 showing more potent activity.

Its subcellular location is the secreted. It localises to the extracellular space. The protein localises to the extracellular matrix. Its function is as follows. Plays a role in the structural integrity of cartilage via its interaction with other extracellular matrix proteins such as the collagens and fibronectin. Can mediate the interaction of chondrocytes with the cartilage extracellular matrix through interaction with cell surface integrin receptors. Could play a role in the pathogenesis of osteoarthritis. Potent suppressor of apoptosis in both primary chondrocytes and transformed cells. Suppresses apoptosis by blocking the activation of caspase-3 and by inducing the IAP family of survival proteins (BIRC3, BIRC2, BIRC5 and XIAP). Essential for maintaining a vascular smooth muscle cells (VSMCs) contractile/differentiated phenotype under physiological and pathological stimuli. Maintains this phenotype of VSMCs by interacting with ITGA7. The sequence is that of Cartilage oligomeric matrix protein from Rattus norvegicus (Rat).